We begin with the raw amino-acid sequence, 342 residues long: tRNA (guanine(26)-N(2))-dimethyltransferase (342 aa).

Residues 1–336 (MRITEGSAVI…CPYAEVSEIL (336 aa)) form the Trm1 methyltransferase domain. Residues arginine 35, arginine 60, and glutamate 76 each contribute to the S-adenosyl-L-methionine site.

This sequence belongs to the class I-like SAM-binding methyltransferase superfamily. Trm1 family.

The catalysed reaction is guanosine(26) in tRNA + 2 S-adenosyl-L-methionine = N(2)-dimethylguanosine(26) in tRNA + 2 S-adenosyl-L-homocysteine + 2 H(+). Its function is as follows. Dimethylates a single guanine residue at position 26 of a number of tRNAs using S-adenosyl-L-methionine as donor of the methyl groups. In Thermoplasma volcanium (strain ATCC 51530 / DSM 4299 / JCM 9571 / NBRC 15438 / GSS1), this protein is tRNA (guanine(26)-N(2))-dimethyltransferase.